The chain runs to 184 residues: Adenine phosphoribosyltransferase (184 aa).

This sequence belongs to the purine/pyrimidine phosphoribosyltransferase family. As to quaternary structure, homodimer.

It is found in the cytoplasm. The catalysed reaction is AMP + diphosphate = 5-phospho-alpha-D-ribose 1-diphosphate + adenine. It participates in purine metabolism; AMP biosynthesis via salvage pathway; AMP from adenine: step 1/1. Functionally, catalyzes a salvage reaction resulting in the formation of AMP, that is energically less costly than de novo synthesis. In Corynebacterium diphtheriae (strain ATCC 700971 / NCTC 13129 / Biotype gravis), this protein is Adenine phosphoribosyltransferase.